A 572-amino-acid polypeptide reads, in one-letter code: MATTTMRMIISIILISTYVPHITLCQNITEEFYQSTCSAVSRGYLSALRTGWYTSVVTIELSKIQKNVCNGTDSKVKLIKQELERYNNAVAELQSLMQNEPTSSSRAKRGIPESIHYTRNSTKKFYGLMGKKRKRRFLGFLLGIGSAIASGVAVSKVLHLEGEVNKIKNALLSTNKAVVSLSNGVSVLTSKVLDLKNYIDKELLPKVNNHDCRISNIATVIEFQQKNNRLLEIAREFSVNAGITTPLSTYMLTNSELLSIINDMPITNDQKKLMSVCQIVRQQSYSIMSVLREVIAYVVQLPLYGVIDTPCWKLHTSPLCTTDNKEGSNICLTRTDRGWYCDNAGSVSFFPQAETCKVQSNRVFCDTMNSLTLPTDVNLCNTDIFNSKYDCKIMTSKTDISSSVITSIGAIVSCYGKTKCTASNKNRGIIKTFSNGCDYVSNKGVDTVSVGNTLYYVNKLEGKALYIKGEPIINYYNPLVFPSDEFDASIAQVNAKINQSLAFIRRSDELLHSVDVGKSTTNVVITTIIIVIVVVILMLITVGLLFYCKTRSTPIMLGKDQLSSINNLSFSK.

The N-terminal stretch at 1–25 is a signal peptide; the sequence is MATTTMRMIISIILISTYVPHITLC. Residues 26–522 are Extracellular-facing; sequence QNITEEFYQS…SVDVGKSTTN (497 aa). N-linked (GlcNAc...) asparagine; by host glycosylation is found at Asn27 and Asn70. 7 disulfide bridges follow: Cys37–Cys437, Cys69–Cys212, Cys311–Cys341, Cys320–Cys331, Cys356–Cys365, Cys380–Cys391, and Cys414–Cys420. A coiled-coil region spans residues 76–96; that stretch reads VKLIKQELERYNNAVAELQSL. An N-linked (GlcNAc...) asparagine; by host glycan is attached at Asn120. The interval 137-157 is fusion peptide; that stretch reads FLGFLLGIGSAIASGVAVSKV. The stretch at 156 to 207 forms a coiled coil; that stretch reads KVLHLEGEVNKIKNALLSTNKAVVSLSNGVSVLTSKVLDLKNYIDKELLPKV. Residues 479 to 514 are a coiled coil; sequence LVFPSDEFDASIAQVNAKINQSLAFIRRSDELLHSV. A glycan (N-linked (GlcNAc...) asparagine; by host) is linked at Asn498. Residues 523-548 form a helical membrane-spanning segment; the sequence is VVITTIIIVIVVVILMLITVGLLFYC. Cys548 carries the S-palmitoyl cysteine; by host lipid modification. At 549–572 the chain is on the cytoplasmic side; it reads KTRSTPIMLGKDQLSSINNLSFSK.

Belongs to the paramyxoviruses fusion glycoprotein family. Homotrimer. Heterodimer with fusion protein F2; disulfide-linked. Part of a complex composed of F1, F2 and G glycoproteins. As a heterodimer with F2, interacts with host RHOA; this interaction facilitates virus-induced syncytium formation. As to quaternary structure, homotrimer. Heterodimer with fusion protein F1; disulfide-linked. Part of a complex composed of F1, F2 and G glycoproteins. As a heterodimer with F1, interacts with host RHOA; this interaction facilitates virus-induced syncytium formation. In terms of processing, the F glycoprotein is synthesized as a F0 inactive precursor that is heavily N-glycosylated and processed at two sites by a host furin-like protease probably in the Golgi. The cleavage site between p27 and F1 may occur after endocytosis to yield the mature F1 and F2 proteins. Both cleavages are required for membrane fusion and p27 is released from the processed protein.

The protein resides in the host Golgi apparatus membrane. It is found in the virion membrane. It localises to the host cell membrane. Inactive precursor that is cleaved at two sites by a furin-like protease to give rise to the mature F1 and F2 fusion glycoproteins. In terms of biological role, class I viral fusion protein. Under the current model, the protein has at least 3 conformational states: pre-fusion native state, pre-hairpin intermediate state, and post-fusion hairpin state. During viral and plasma cell membrane fusion, the coiled coil regions assume a trimer-of-hairpins structure, positioning the fusion peptide in close proximity to the C-terminal region of the ectodomain. The formation of this structure appears to drive apposition and subsequent fusion of viral and cellular membranes leading to delivery of the nucleocapsid into the cytoplasm. This fusion is pH independent and occurs at the plasma or endosomal membrane. The trimer of F1-F2 (F protein) also facilitates the attachment and entry into the host cell. Later in infection, F protein expressed at the plasma membrane of infected cells can mediate fusion with adjacent cells to form syncytia, a cytopathic effect that could lead to tissue necrosis. Functionally, major determinant of the species specificity of RSV infection. The trimer of F1-F2 (F protein) also facilitates the attachment and entry into the host cell. Later in infection, F protein expressed at the plasma membrane of infected cells can mediate fusion with adjacent cells to form syncytia, a cytopathic effect that could lead to tissue necrosis. The sequence is that of Fusion glycoprotein F0 (F) from Bovine respiratory syncytial virus (strain A51908) (BRS).